Reading from the N-terminus, the 126-residue chain is Fatty acid-binding protein, liver (126 aa).

Ala2 is modified (N-acetylalanine). Residues Lys77, His99, and Gln101 each coordinate cholate.

It belongs to the calycin superfamily. Fatty-acid binding protein (FABP) family.

It localises to the cytoplasm. In terms of biological role, binds free fatty acids and their coenzyme A derivatives, bilirubin, and some other small molecules in the cytoplasm. May be involved in intracellular lipid transport. In Aquarana catesbeiana (American bullfrog), this protein is Fatty acid-binding protein, liver (fabp1).